Reading from the N-terminus, the 428-residue chain is Serine--tRNA ligase (428 aa).

235 to 237 (TAE) is an L-serine binding site. 266–268 (RSE) lines the ATP pocket. Position 289 (glutamate 289) interacts with L-serine. 353–356 (EISS) lines the ATP pocket. Residue serine 389 participates in L-serine binding.

This sequence belongs to the class-II aminoacyl-tRNA synthetase family. Type-1 seryl-tRNA synthetase subfamily. In terms of assembly, homodimer. The tRNA molecule binds across the dimer.

It is found in the cytoplasm. The catalysed reaction is tRNA(Ser) + L-serine + ATP = L-seryl-tRNA(Ser) + AMP + diphosphate + H(+). The enzyme catalyses tRNA(Sec) + L-serine + ATP = L-seryl-tRNA(Sec) + AMP + diphosphate + H(+). It participates in aminoacyl-tRNA biosynthesis; selenocysteinyl-tRNA(Sec) biosynthesis; L-seryl-tRNA(Sec) from L-serine and tRNA(Sec): step 1/1. Catalyzes the attachment of serine to tRNA(Ser). Is also able to aminoacylate tRNA(Sec) with serine, to form the misacylated tRNA L-seryl-tRNA(Sec), which will be further converted into selenocysteinyl-tRNA(Sec). This is Serine--tRNA ligase from Shewanella halifaxensis (strain HAW-EB4).